A 328-amino-acid polypeptide reads, in one-letter code: COP9 signalosome complex subunit 6 (328 aa).

Residues 42 to 175 form the MPN domain; it reads VALHPLVILN…VSVFESVIDI (134 aa).

It belongs to the peptidase M67A family. CSN6 subfamily. As to quaternary structure, component of the CSN complex, composed of COPS1/GPS1, COPS2, COPS3, COPS4, COPS5, COPS6, COPS7 (COPS7A or COPS7B), COPS8 and COPS9. In the complex, it probably interacts directly with COPS2, COPS4, COPS5, COPS7 (COPS7A or COPS7B) and COPS9. Interacts with the translation initiation factor EIF3S6. Interacts weakly with RBX1. Directly interacts with COP1 and 14-3-3 protein sigma/SFN. Interacts with ERCC6.

It is found in the cytoplasm. Its subcellular location is the nucleus. Functionally, component of the COP9 signalosome complex (CSN), a complex involved in various cellular and developmental processes. The CSN complex is an essential regulator of the ubiquitin (Ubl) conjugation pathway by mediating the deneddylation of the cullin subunits of SCF-type E3 ligase complexes, leading to decrease the Ubl ligase activity of SCF-type complexes such as SCF, CSA or DDB2. The complex is also involved in phosphorylation of p53/TP53, c-jun/JUN, IkappaBalpha/NFKBIA, ITPK1 and IRF8, possibly via its association with CK2 and PKD kinases. CSN-dependent phosphorylation of TP53 and JUN promotes and protects degradation by the Ubl system, respectively. Has some glucocorticoid receptor-responsive activity. Stabilizes COP1 through reducing COP1 auto-ubiquitination and decelerating COP1 turnover rate, hence regulates the ubiquitination of COP1 targets, including SFN. In Pongo abelii (Sumatran orangutan), this protein is COP9 signalosome complex subunit 6 (COPS6).